We begin with the raw amino-acid sequence, 215 residues long: 3-isopropylmalate dehydratase small subunit (215 aa).

The protein belongs to the LeuD family. LeuD type 1 subfamily. In terms of assembly, heterodimer of LeuC and LeuD.

It carries out the reaction (2R,3S)-3-isopropylmalate = (2S)-2-isopropylmalate. Its pathway is amino-acid biosynthesis; L-leucine biosynthesis; L-leucine from 3-methyl-2-oxobutanoate: step 2/4. Catalyzes the isomerization between 2-isopropylmalate and 3-isopropylmalate, via the formation of 2-isopropylmaleate. This is 3-isopropylmalate dehydratase small subunit from Chromohalobacter salexigens (strain ATCC BAA-138 / DSM 3043 / CIP 106854 / NCIMB 13768 / 1H11).